A 414-amino-acid polypeptide reads, in one-letter code: Gamma-glutamyl phosphate reductase (414 aa).

Belongs to the gamma-glutamyl phosphate reductase family.

Its subcellular location is the cytoplasm. It carries out the reaction L-glutamate 5-semialdehyde + phosphate + NADP(+) = L-glutamyl 5-phosphate + NADPH + H(+). It functions in the pathway amino-acid biosynthesis; L-proline biosynthesis; L-glutamate 5-semialdehyde from L-glutamate: step 2/2. Its function is as follows. Catalyzes the NADPH-dependent reduction of L-glutamate 5-phosphate into L-glutamate 5-semialdehyde and phosphate. The product spontaneously undergoes cyclization to form 1-pyrroline-5-carboxylate. The polypeptide is Gamma-glutamyl phosphate reductase (Alkaliphilus metalliredigens (strain QYMF)).